Reading from the N-terminus, the 427-residue chain is Indole diterpene prenyltransferase penD (427 aa).

77–78 is a binding site for L-tryptophan; that stretch reads YV. Substrate-binding residues include arginine 99, lysine 186, tyrosine 188, arginine 259, lysine 261, tyrosine 263, tyrosine 344, tyrosine 409, and tyrosine 413.

The protein belongs to the tryptophan dimethylallyltransferase family.

Its pathway is secondary metabolite biosynthesis. Its function is as follows. Indole diterpene prenyltransferase; part of the gene cluster that mediates the biosynthesis of the indole diterpenes penitrems. The geranylgeranyl diphosphate (GGPP) synthase penG catalyzes the first step in penitrem biosynthesis via conversion of farnesyl pyrophosphate and isopentyl pyrophosphate into geranylgeranyl pyrophosphate (GGPP). Condensation of indole-3-glycerol phosphate with GGPP by the prenyl transferase penC then forms 3-geranylgeranylindole (3-GGI). Epoxidation by the FAD-dependent monooxygenase penM leads to a epoxidized-GGI that is substrate of the terpene cyclase penB for cyclization to yield paspaline. Paspaline is subsequently converted to 13-desoxypaxilline by the cytochrome P450 monooxygenase penP, the latter being then converted to paxilline by the cytochrome P450 monooxygenase penQ. Paxilline is converted to beta-paxitriol via C-10 ketoreduction by the short-chain dehydrogenase PC-15 which can be monoprenylated at the C-20 by the indole diterpene prenyltransferase penD. A two-step elimination (acetylation and elimination) process performed by the O-acetyltransferase PC-16 and the P.simplicissimum ptmI-ortholog not yet identified in P.crustosum, leads to the production of the prenylated form of penijanthine. The FAD-linked oxidoreductase ptmO then converts the prenylated form of penijanthine into PC-M5 which is in turn transformed into PC-M4 by the aromatic dimethylallyltransferase PC-22. A series of oxidation steps involving 4 cytochrome P450 monooxygenases (PC-21, PC-05, PC-23, PC-20) and a FAD-dependent monooxygenase (PC-14) are required for the transformation of PC-M4 to penitrems A and E. Synthesis of these final products is proposed to proceed via penitrems D and C (PC-21, PC-05, PC-14) and penitrems B and F (PC-21, PC-05, PC-14, PC-23). The protein is Indole diterpene prenyltransferase penD of Penicillium crustosum (Blue mold fungus).